The following is a 303-amino-acid chain: Oxygen-dependent coproporphyrinogen-III oxidase (303 aa).

S93 serves as a coordination point for substrate. Residues H97 and H107 each contribute to the a divalent metal cation site. The Proton donor role is filled by H107. Substrate is bound at residue 109–111 (NVR). H146 and H176 together coordinate a divalent metal cation. The important for dimerization stretch occupies residues 241–276 (YVEFNLVYDRGTLFGLQSGGRTESILMSLPPQVRWG). 259–261 (GGR) serves as a coordination point for substrate.

It belongs to the aerobic coproporphyrinogen-III oxidase family. Homodimer. A divalent metal cation serves as cofactor.

It is found in the cytoplasm. The catalysed reaction is coproporphyrinogen III + O2 + 2 H(+) = protoporphyrinogen IX + 2 CO2 + 2 H2O. The protein operates within porphyrin-containing compound metabolism; protoporphyrin-IX biosynthesis; protoporphyrinogen-IX from coproporphyrinogen-III (O2 route): step 1/1. Functionally, involved in the heme biosynthesis. Catalyzes the aerobic oxidative decarboxylation of propionate groups of rings A and B of coproporphyrinogen-III to yield the vinyl groups in protoporphyrinogen-IX. This chain is Oxygen-dependent coproporphyrinogen-III oxidase, found in Pseudomonas putida (strain W619).